We begin with the raw amino-acid sequence, 197 residues long: Peptidyl-tRNA hydrolase (197 aa).

Tyr-23 contributes to the tRNA binding site. Residue His-28 is the Proton acceptor of the active site. Positions 73, 75, and 121 each coordinate tRNA.

The protein belongs to the PTH family. In terms of assembly, monomer.

The protein localises to the cytoplasm. It carries out the reaction an N-acyl-L-alpha-aminoacyl-tRNA + H2O = an N-acyl-L-amino acid + a tRNA + H(+). Functionally, hydrolyzes ribosome-free peptidyl-tRNAs (with 1 or more amino acids incorporated), which drop off the ribosome during protein synthesis, or as a result of ribosome stalling. Its function is as follows. Catalyzes the release of premature peptidyl moieties from peptidyl-tRNA molecules trapped in stalled 50S ribosomal subunits, and thus maintains levels of free tRNAs and 50S ribosomes. In Frankia alni (strain DSM 45986 / CECT 9034 / ACN14a), this protein is Peptidyl-tRNA hydrolase.